Consider the following 80-residue polypeptide: Large ribosomal subunit protein uL29 (80 aa).

The protein belongs to the universal ribosomal protein uL29 family.

This chain is Large ribosomal subunit protein uL29, found in Mycobacterium marinum (strain ATCC BAA-535 / M).